A 127-amino-acid chain; its full sequence is MFRTMMNGKIHRATVTEANLNYVGSITIDSAILEAVDMLPNEKVQIVNNNNGARIETYIIPGEPGSGVICLNGAAARHVQVGDVVIIMSYGMFTSEEAKTHEPKIVVLDEKNHIEMILPEEKAHTTL.

Ser-25 (schiff-base intermediate with substrate; via pyruvic acid) is an active-site residue. Pyruvic acid (Ser) is present on Ser-25. Residue Thr-57 participates in substrate binding. The active-site Proton donor is the Tyr-58. 73-75 contacts substrate; the sequence is GAA.

It belongs to the PanD family. In terms of assembly, heterooctamer of four alpha and four beta subunits. It depends on pyruvate as a cofactor. In terms of processing, is synthesized initially as an inactive proenzyme, which is activated by self-cleavage at a specific serine bond to produce a beta-subunit with a hydroxyl group at its C-terminus and an alpha-subunit with a pyruvoyl group at its N-terminus.

It is found in the cytoplasm. It carries out the reaction L-aspartate + H(+) = beta-alanine + CO2. It functions in the pathway cofactor biosynthesis; (R)-pantothenate biosynthesis; beta-alanine from L-aspartate: step 1/1. Functionally, catalyzes the pyruvoyl-dependent decarboxylation of aspartate to produce beta-alanine. The chain is Aspartate 1-decarboxylase from Listeria innocua serovar 6a (strain ATCC BAA-680 / CLIP 11262).